Here is a 376-residue protein sequence, read N- to C-terminus: MSQAELNGELFTLERFPPNAEEEALQAWEAADEYLLQQVNDVDGLTLIFNDGFGALACALAERNPVSINDSFISELATRHNLRMNGIDEESVRFQDSLSPLPAAPALVLIKVPKQLALLEQQLRALREVVTPETRIIAAAKARDVHNSTLALFEKILGTTTTSLAWKKARLIHCVFTAPKLADAPQTYSWKLDGTPWTIHNHANVFARSGLDIGARFFLQHLPSDLEGEIADLGCGNGVIGLQALAQNPNASVMFTDESHMAVASSRLNVERNLPDDIARCEFMVNNSLSGIEPDRFTAILCNPPFHQQHAITDHIAWQMFNDARRSLKYGGELYVVGNRHLDYFRKLKRAFGNCTTIATNNKFVILKATKVRKQR.

Belongs to the methyltransferase superfamily. RlmG family.

It localises to the cytoplasm. The catalysed reaction is guanosine(1835) in 23S rRNA + S-adenosyl-L-methionine = N(2)-methylguanosine(1835) in 23S rRNA + S-adenosyl-L-homocysteine + H(+). Functionally, specifically methylates the guanine in position 1835 (m2G1835) of 23S rRNA. In Klebsiella pneumoniae (strain 342), this protein is Ribosomal RNA large subunit methyltransferase G.